Here is a 411-residue protein sequence, read N- to C-terminus: Dual-specificity RNA methyltransferase RlmN (411 aa).

The active-site Proton acceptor is glutamate 125. Positions 131-380 (EEGRGTLCIS…IRTPRGRDIL (250 aa)) constitute a Radical SAM core domain. A disulfide bridge connects residues cysteine 138 and cysteine 383. Residues cysteine 145, cysteine 149, and cysteine 152 each coordinate [4Fe-4S] cluster. S-adenosyl-L-methionine is bound by residues 209-210 (GE), serine 241, 263-265 (SLH), and asparagine 340. Cysteine 383 serves as the catalytic S-methylcysteine intermediate.

Belongs to the radical SAM superfamily. RlmN family. Requires [4Fe-4S] cluster as cofactor.

It localises to the cytoplasm. The enzyme catalyses adenosine(2503) in 23S rRNA + 2 reduced [2Fe-2S]-[ferredoxin] + 2 S-adenosyl-L-methionine = 2-methyladenosine(2503) in 23S rRNA + 5'-deoxyadenosine + L-methionine + 2 oxidized [2Fe-2S]-[ferredoxin] + S-adenosyl-L-homocysteine. It carries out the reaction adenosine(37) in tRNA + 2 reduced [2Fe-2S]-[ferredoxin] + 2 S-adenosyl-L-methionine = 2-methyladenosine(37) in tRNA + 5'-deoxyadenosine + L-methionine + 2 oxidized [2Fe-2S]-[ferredoxin] + S-adenosyl-L-homocysteine. Functionally, specifically methylates position 2 of adenine 2503 in 23S rRNA and position 2 of adenine 37 in tRNAs. m2A2503 modification seems to play a crucial role in the proofreading step occurring at the peptidyl transferase center and thus would serve to optimize ribosomal fidelity. This chain is Dual-specificity RNA methyltransferase RlmN, found in Brucella suis biovar 1 (strain 1330).